A 227-amino-acid chain; its full sequence is Flagellar transcriptional regulator FtcR (227 aa).

The Response regulatory domain occupies 1-116 (MIVVVDDRDM…EILARINAIR (116 aa)). A DNA-binding region (ompR/PhoB-type) is located at residues 127-226 (ADGTQLGPIR…KRFLGYCINI (100 aa)).

Required for transcription of flagellar genes. This chain is Flagellar transcriptional regulator FtcR (ftcR), found in Brucella abortus (strain 2308).